Consider the following 406-residue polypeptide: Nodal homolog (406 aa).

Positions 1–18 (MAFLTAVLYLGFACISQG) are cleaved as a signal peptide. A propeptide spanning residues 19 to 281 (LPTWPDRVES…RVPGIRRHRR (263 aa)) is cleaved from the precursor. Residues asparagine 71, asparagine 136, and asparagine 172 are each glycosylated (N-linked (GlcNAc...) asparagine). A disordered region spans residues 195 to 222 (KERAERGSGMSNAEFIDAPGPSQQYNPH). 3 disulfide bridges follow: cysteine 306–cysteine 372, cysteine 335–cysteine 403, and cysteine 339–cysteine 405. N-linked (GlcNAc...) asparagine glycosylation is present at asparagine 344.

This sequence belongs to the TGF-beta family. In terms of assembly, homodimer; disulfide-linked. Interacts with, and is inhibited by cer1 and gdf10/bmp3b. In the first phase of expression, localized to the vegetal region of the blastula. During gastrulation (stage 10.5), this expression disappears and instead becomes localized to the dorsal marginal zone, with enrichment in the organizer. During the second phase of expression in neurulae and tailbud embryos, expression restarts firstly in two symmetric patches near the posterior end of the notochord, and then in a large asymmetrical domain in the left lateral plate mesoderm.

The protein localises to the secreted. Cooperation and regulatory loops of multiple nodals are essential for mesendoderm patterning in early embryos. Essential for mesoderm formation and axial patterning during embryonic development. Activates the activin-like signaling pathway to induce dorsal and ventral mesoderm in animal cap ectoderm. In addition, also dorsalizes ventral marginal zone (VMZ) tissues during gastrulation. Acts in a downstream signaling cascade via cripto and cer1 to mediate cardiogenesis in embryonic mesoderm. Directs the orientation of the left-right axis by driving the left-specific gene cascade in the left lateral plate mesoderm. In Xenopus laevis (African clawed frog), this protein is Nodal homolog.